A 298-amino-acid polypeptide reads, in one-letter code: Acetyl-coenzyme A carboxylase carboxyl transferase subunit beta (298 aa).

One can recognise a CoA carboxyltransferase N-terminal domain in the interval 26–295 (LWIKCPETGE…DNANAVVPLA (270 aa)).

Belongs to the AccD/PCCB family. Acetyl-CoA carboxylase is a heterohexamer composed of biotin carboxyl carrier protein (AccB), biotin carboxylase (AccC) and two subunits each of ACCase subunit alpha (AccA) and ACCase subunit beta (AccD).

The protein localises to the cytoplasm. It catalyses the reaction N(6)-carboxybiotinyl-L-lysyl-[protein] + acetyl-CoA = N(6)-biotinyl-L-lysyl-[protein] + malonyl-CoA. The protein operates within lipid metabolism; malonyl-CoA biosynthesis; malonyl-CoA from acetyl-CoA: step 1/1. Functionally, component of the acetyl coenzyme A carboxylase (ACC) complex. Biotin carboxylase (BC) catalyzes the carboxylation of biotin on its carrier protein (BCCP) and then the CO(2) group is transferred by the transcarboxylase to acetyl-CoA to form malonyl-CoA. The chain is Acetyl-coenzyme A carboxylase carboxyl transferase subunit beta from Agrobacterium fabrum (strain C58 / ATCC 33970) (Agrobacterium tumefaciens (strain C58)).